The primary structure comprises 828 residues: Periplasmic nitrate reductase (828 aa).

The segment at residues 1 to 31 is a signal peptide (tat-type signal); that stretch reads MKLSRRSFMKANAVAAAAAAAGLSVPGVARA. The region spanning 39–95 is the 4Fe-4S Mo/W bis-MGD-type domain; it reads IKWDKAPCRFCGTGCGVLVGTQQGRVVACQGDPDAPVNRGLNCIKGYFLPKIMYGKD. [4Fe-4S] cluster-binding residues include cysteine 46, cysteine 49, cysteine 53, and cysteine 81. Mo-bis(molybdopterin guanine dinucleotide)-binding positions include lysine 83, glutamine 150, asparagine 175, cysteine 179, 212–219, 243–247, 262–264, methionine 372, glutamine 376, asparagine 482, 508–509, lysine 531, aspartate 558, and 718–727; these read WGSNMAEM, STFQH, QSD, SD, and TGRVLEHWHT. Residue phenylalanine 794 coordinates substrate. 2 residues coordinate Mo-bis(molybdopterin guanine dinucleotide): asparagine 802 and lysine 819.

Belongs to the prokaryotic molybdopterin-containing oxidoreductase family. NasA/NapA/NarB subfamily. As to quaternary structure, component of the periplasmic nitrate reductase NapAB complex composed of NapA and NapB. [4Fe-4S] cluster serves as cofactor. The cofactor is Mo-bis(molybdopterin guanine dinucleotide). Post-translationally, predicted to be exported by the Tat system. The position of the signal peptide cleavage has not been experimentally proven.

It is found in the periplasm. It carries out the reaction 2 Fe(II)-[cytochrome] + nitrate + 2 H(+) = 2 Fe(III)-[cytochrome] + nitrite + H2O. In terms of biological role, catalytic subunit of the periplasmic nitrate reductase complex NapAB. Receives electrons from NapB and catalyzes the reduction of nitrate to nitrite. The polypeptide is Periplasmic nitrate reductase (Salmonella arizonae (strain ATCC BAA-731 / CDC346-86 / RSK2980)).